Consider the following 272-residue polypeptide: 27-O-demethylrifamycin SV methyltransferase (272 aa).

S-adenosyl-L-methionine is bound by residues S89, Q94, 117–118 (DA), L134, and H139.

The protein belongs to the class I-like SAM-binding methyltransferase superfamily. In terms of assembly, exists probably as a trimer.

It carries out the reaction 27-O-demethylrifamycin SV + S-adenosyl-L-methionine = rifamycin SV + S-adenosyl-L-homocysteine + H(+). It participates in antibiotic biosynthesis; rifamycin B biosynthesis. Slightly inhibited by Ca(2+) and Mg(2+). Strongly inhibited by Zn(2+), Ni(2+) and Co(2+). In terms of biological role, catalyzes the methylation of 27-O-demethylrifamycin SV (DMRSV) to rifamycin SV. In Amycolatopsis mediterranei (strain S699) (Nocardia mediterranei), this protein is 27-O-demethylrifamycin SV methyltransferase.